The primary structure comprises 217 residues: Thiamine-phosphate synthase (217 aa).

4-amino-2-methyl-5-(diphosphooxymethyl)pyrimidine-binding positions include Gln-37–Lys-41 and Asn-72. Residues Asp-73 and Asp-92 each coordinate Mg(2+). Residue Ser-110 coordinates 4-amino-2-methyl-5-(diphosphooxymethyl)pyrimidine. Thr-136–Ser-138 contacts 2-[(2R,5Z)-2-carboxy-4-methylthiazol-5(2H)-ylidene]ethyl phosphate. Residue Lys-139 coordinates 4-amino-2-methyl-5-(diphosphooxymethyl)pyrimidine. 2-[(2R,5Z)-2-carboxy-4-methylthiazol-5(2H)-ylidene]ethyl phosphate is bound by residues Gly-168 and Ile-188–Ser-189.

It belongs to the thiamine-phosphate synthase family. Requires Mg(2+) as cofactor.

It carries out the reaction 2-[(2R,5Z)-2-carboxy-4-methylthiazol-5(2H)-ylidene]ethyl phosphate + 4-amino-2-methyl-5-(diphosphooxymethyl)pyrimidine + 2 H(+) = thiamine phosphate + CO2 + diphosphate. It catalyses the reaction 2-(2-carboxy-4-methylthiazol-5-yl)ethyl phosphate + 4-amino-2-methyl-5-(diphosphooxymethyl)pyrimidine + 2 H(+) = thiamine phosphate + CO2 + diphosphate. The catalysed reaction is 4-methyl-5-(2-phosphooxyethyl)-thiazole + 4-amino-2-methyl-5-(diphosphooxymethyl)pyrimidine + H(+) = thiamine phosphate + diphosphate. It functions in the pathway cofactor biosynthesis; thiamine diphosphate biosynthesis; thiamine phosphate from 4-amino-2-methyl-5-diphosphomethylpyrimidine and 4-methyl-5-(2-phosphoethyl)-thiazole: step 1/1. Condenses 4-methyl-5-(beta-hydroxyethyl)thiazole monophosphate (THZ-P) and 2-methyl-4-amino-5-hydroxymethyl pyrimidine pyrophosphate (HMP-PP) to form thiamine monophosphate (TMP). The polypeptide is Thiamine-phosphate synthase (Anoxybacillus flavithermus (strain DSM 21510 / WK1)).